The primary structure comprises 573 residues: Probable zinc metallopeptidase EGY3, chloroplastic (573 aa).

The N-terminal 50 residues, 1–50 (MASLFVSTPSSSLTLKSCHSLHLRRFDRAEFSNFGKASVNQTTRSRHSLR), are a transit peptide targeting the chloroplast. Residues 38–105 (SVNQTTRSRH…EKKSKQQEMD (68 aa)) form a disordered region. 2 stretches are compositionally biased toward basic and acidic residues: residues 52–62 (SAEDDRVREPV) and 96–105 (EKKSKQQEMD). Positions 122–185 (EAAIKLEKTR…KALDLNKLKS (64 aa)) form a coiled coil. 7 consecutive transmembrane segments (helical) span residues 274 to 294 (VSAI…SGFF), 305 to 325 (IANV…SEIA), 376 to 396 (ASAY…DGSF), 414 to 434 (PLLS…GNVL), 441 to 461 (VGVP…VTSL), 493 to 513 (LLLG…GLFA), and 536 to 556 (FAWG…NSGG).

This sequence belongs to the peptidase M50B family.

The protein resides in the plastid. It localises to the chloroplast membrane. Its function is as follows. Probable membrane-associated metalloprotease that may be involved in chloroplast development. This is Probable zinc metallopeptidase EGY3, chloroplastic (EGY3) from Arabidopsis thaliana (Mouse-ear cress).